The primary structure comprises 357 residues: Putative ABC transporter ATP-binding protein MG303 (357 aa).

The ABC transporter domain occupies 72–312 (LFFNNISVFV…TSWLMQYGIT (241 aa)). 107–114 (GESGSGKT) contributes to the ATP binding site.

It belongs to the ABC transporter superfamily.

The chain is Putative ABC transporter ATP-binding protein MG303 from Mycoplasma genitalium (strain ATCC 33530 / DSM 19775 / NCTC 10195 / G37) (Mycoplasmoides genitalium).